Consider the following 94-residue polypeptide: MGETLPQQLPNMNAVSQIIAQQKLAAIMEQVCSDHVPTIITRDTQPSVVMISLEDYQSLEETAYLLRSPNNAQKLMSAIKQLENDQGVERELLE.

It belongs to the phD/YefM antitoxin family.

This is an uncharacterized protein from Synechocystis sp. (strain ATCC 27184 / PCC 6803 / Kazusa).